A 146-amino-acid polypeptide reads, in one-letter code: GFLTAEEKGLVNGLWGKVNVDEVGGEALGRLLVVYPWTQRFFESFGDLSSADAIMSNAKVKAHGKKVLNSFSDGLKNIDDLKGAFAKLSELHCDKLHVDPENFRLLGNVLVCVLAHHFGHDFNPQVQAAFQKVVAGVANALAHKYH.

At Gly-1 the chain carries N-acetylserine; in variant beta-B. Positions 2–146 constitute a Globin domain; the sequence is FLTAEEKGLV…VANALAHKYH (145 aa). Ser-44 is modified (phosphoserine). Lys-59 carries the N6-acetyllysine modification. A heme b-binding site is contributed by His-63. Position 82 is an N6-acetyllysine (Lys-82). His-92 is a binding site for heme b. At Cys-93 the chain carries S-nitrosocysteine. Position 144 is an N6-acetyllysine (Lys-144).

Belongs to the globin family. In terms of assembly, heterotetramer of two alpha chains and two beta chains. As to expression, red blood cells.

Functionally, involved in oxygen transport from the lung to the various peripheral tissues. This Felis catus (Cat) protein is Hemoglobin subunit beta-A/B (HBB).